A 450-amino-acid chain; its full sequence is Phosphoglucosamine mutase (450 aa).

Residue S102 is the Phosphoserine intermediate of the active site. Positions 102, 243, 245, and 247 each coordinate Mg(2+). Position 102 is a phosphoserine (S102).

Belongs to the phosphohexose mutase family. The cofactor is Mg(2+). In terms of processing, activated by phosphorylation.

The enzyme catalyses alpha-D-glucosamine 1-phosphate = D-glucosamine 6-phosphate. Functionally, catalyzes the conversion of glucosamine-6-phosphate to glucosamine-1-phosphate. This chain is Phosphoglucosamine mutase, found in Mesorhizobium japonicum (strain LMG 29417 / CECT 9101 / MAFF 303099) (Mesorhizobium loti (strain MAFF 303099)).